Reading from the N-terminus, the 470-residue chain is Probable E3 ubiquitin-protein ligase TRIML1 (470 aa).

The segment at 22–63 (CFICLDYFSSPVTTECGHSFCLMCLLKSWEEHNTPLSCPECW) adopts an RING-type zinc-finger fold. 2 coiled-coil regions span residues 135–170 (SEAE…KERV) and 196–235 (KEEE…GKMI). The region spanning 273–470 (TELSLCHITG…NTDPLIICHI (198 aa)) is the B30.2/SPRY domain.

As to quaternary structure, interacts with USP5. In terms of tissue distribution, testis.

The catalysed reaction is S-ubiquitinyl-[E2 ubiquitin-conjugating enzyme]-L-cysteine + [acceptor protein]-L-lysine = [E2 ubiquitin-conjugating enzyme]-L-cysteine + N(6)-ubiquitinyl-[acceptor protein]-L-lysine.. Its pathway is protein modification; protein ubiquitination. Its function is as follows. Probable E3 ubiquitin-protein ligase which plays an important role in blastocyst development. Involved in progression of blastocyst stage and subsequent embryo development. In Mus musculus (Mouse), this protein is Probable E3 ubiquitin-protein ligase TRIML1 (Triml1).